A 214-amino-acid polypeptide reads, in one-letter code: U3 small nucleolar RNA-associated protein 16 (214 aa).

A compositionally biased stretch (basic and acidic residues) spans methionine 1–alanine 10. The segment at methionine 1–aspartate 106 is disordered. At serine 16 the chain carries Phosphoserine. Basic and acidic residues predominate over residues aspartate 22–serine 41. The segment covering aspartate 42–glutamine 52 has biased composition (acidic residues). A phosphoserine mark is found at serine 45, serine 65, and serine 144. Positions glutamate 54 to arginine 75 are enriched in basic and acidic residues. Residues serine 182–glycine 214 form a disordered region. Residues proline 192–leucine 206 show a composition bias toward basic and acidic residues.

This sequence belongs to the UTP16 family. In terms of assembly, part of the small subunit (SSU) processome composed of at least 40 protein subunits and the RNA chaperone small nucleolar RNA (snoRNA) U3. Interacts with snoRNA U3. Interacts with MPP10.

The protein resides in the nucleus. It is found in the nucleolus. Its function is as follows. Functions as part of the small subunit (SSU) processome, first precursor of the small eukaryotic ribosomal subunit that coordinates the first two steps of ribosome biogenesis in transcription of the primary transcript pre-RNA and pre-18S processing. During the assembly of the SSU processome in the nucleolus, many ribosome biogenesis factors, an RNA chaperone and ribosomal proteins associate with the nascent pre-rRNA and work in concert to generate RNA folding, modifications, rearrangements and cleavage as well as targeted degradation of pre-ribosomal RNA by the RNA exosome. Has a role in bud site selection maybe via the regulation of expression of bipolar budding components. This is U3 small nucleolar RNA-associated protein 16 (BUD21) from Saccharomyces cerevisiae (strain ATCC 204508 / S288c) (Baker's yeast).